The sequence spans 94 residues: Large ribosomal subunit protein uL23 (94 aa).

This sequence belongs to the universal ribosomal protein uL23 family. In terms of assembly, part of the 50S ribosomal subunit. Contacts protein L29, and trigger factor when it is bound to the ribosome.

Functionally, one of the early assembly proteins it binds 23S rRNA. One of the proteins that surrounds the polypeptide exit tunnel on the outside of the ribosome. Forms the main docking site for trigger factor binding to the ribosome. This Treponema pallidum (strain Nichols) protein is Large ribosomal subunit protein uL23.